The following is a 255-amino-acid chain: Uridylate kinase (255 aa).

ATP is bound at residue 22–25; it reads KLSG. The interval 30–35 is involved in allosteric activation by GTP; the sequence is GNGGYG. Gly-64 is a UMP binding site. Residues Gly-65 and Arg-69 each contribute to the ATP site. UMP is bound by residues Asp-85 and 146-153; that span reads TGNPFFTT. 3 residues coordinate ATP: Asn-174, Tyr-180, and Asp-183.

Belongs to the UMP kinase family. In terms of assembly, homohexamer.

It localises to the cytoplasm. It catalyses the reaction UMP + ATP = UDP + ADP. Its pathway is pyrimidine metabolism; CTP biosynthesis via de novo pathway; UDP from UMP (UMPK route): step 1/1. Allosterically activated by GTP. Inhibited by UTP. Catalyzes the reversible phosphorylation of UMP to UDP. The sequence is that of Uridylate kinase from Rubrobacter xylanophilus (strain DSM 9941 / JCM 11954 / NBRC 16129 / PRD-1).